Reading from the N-terminus, the 488-residue chain is V-type proton ATPase subunit B 1 (488 aa).

It belongs to the ATPase alpha/beta chains family. In terms of assembly, V-ATPase is a heteromultimeric enzyme composed of a peripheral catalytic V1 complex (main components: subunits A, B, C, D, E, and F) attached to an integral membrane V0 proton pore complex (main component: the proteolipid protein).

Functionally, non-catalytic subunit of the peripheral V1 complex of vacuolar ATPase. V-ATPase is responsible for acidifying a variety of intracellular compartments in eukaryotic cells. This is V-type proton ATPase subunit B 1 from Hordeum vulgare (Barley).